The primary structure comprises 248 residues: 3-deoxy-manno-octulosonate cytidylyltransferase (248 aa).

Belongs to the KdsB family.

It localises to the cytoplasm. The enzyme catalyses 3-deoxy-alpha-D-manno-oct-2-ulosonate + CTP = CMP-3-deoxy-beta-D-manno-octulosonate + diphosphate. Its pathway is nucleotide-sugar biosynthesis; CMP-3-deoxy-D-manno-octulosonate biosynthesis; CMP-3-deoxy-D-manno-octulosonate from 3-deoxy-D-manno-octulosonate and CTP: step 1/1. It participates in bacterial outer membrane biogenesis; lipopolysaccharide biosynthesis. Activates KDO (a required 8-carbon sugar) for incorporation into bacterial lipopolysaccharide in Gram-negative bacteria. The chain is 3-deoxy-manno-octulosonate cytidylyltransferase from Salmonella agona (strain SL483).